The primary structure comprises 902 residues: DNA mismatch repair protein MutS (902 aa).

Position 654–661 (654–661 (GPNMGGKS)) interacts with ATP.

This sequence belongs to the DNA mismatch repair MutS family.

Its function is as follows. This protein is involved in the repair of mismatches in DNA. It is possible that it carries out the mismatch recognition step. This protein has a weak ATPase activity. This Xanthomonas axonopodis pv. citri (strain 306) protein is DNA mismatch repair protein MutS.